The primary structure comprises 406 residues: MTFPVEKVRADFPILQREVNGLPLAYLDSAASAQKPNQVIDAESAFYRHGYAAVHRGIHTLSAQATESMENVRKQASRFINARSAEELVFVRGTTEGINLVANSWGAENIRAGDNIIISEMEHHANIVPWQMLCERKGAELRVIPLHPDGTLRLETLAALFDDRTRLLAITHVSNVLGTENPLPDMIALARQHGAKVLVDGAQAVMHHAVDVQALDCDFYVFSGHKLYGPTGIGILYVKEALLQEMPPWEGGGSMISTVSLTQGTTWAKAPWRFEAGTPNTGGIIGLGAAIDYVTSLGLDKIGDYEQMLMRYALEQLAQVPDITLYGPAQRLGVIAFNLGKHHAYDVGSFLDNYGIAVRTGHHCAMPLMAWYGVPAMCRASLAMYNTHEEVDRLVAGLTRIHRLLG.

Lys226 bears the N6-(pyridoxal phosphate)lysine mark. Residue Cys364 is the Cysteine persulfide intermediate of the active site.

This sequence belongs to the class-V pyridoxal-phosphate-dependent aminotransferase family. Csd subfamily. In terms of assembly, homodimer. Interacts with SufE and the SufBCD complex composed of SufB, SufC and SufD. The interaction with SufE is required to mediate the direct transfer of the sulfur atom from the S-sulfanylcysteine. Requires pyridoxal 5'-phosphate as cofactor.

The protein resides in the cytoplasm. It catalyses the reaction (sulfur carrier)-H + L-cysteine = (sulfur carrier)-SH + L-alanine. It carries out the reaction L-selenocysteine + AH2 = hydrogenselenide + L-alanine + A + H(+). It functions in the pathway cofactor biosynthesis; iron-sulfur cluster biosynthesis. Its function is as follows. Cysteine desulfurases mobilize the sulfur from L-cysteine to yield L-alanine, an essential step in sulfur metabolism for biosynthesis of a variety of sulfur-containing biomolecules. Component of the suf operon, which is activated and required under specific conditions such as oxidative stress and iron limitation. Acts as a potent selenocysteine lyase in vitro, that mobilizes selenium from L-selenocysteine. Selenocysteine lyase activity is however unsure in vivo. The sequence is that of Cysteine desulfurase from Salmonella gallinarum (strain 287/91 / NCTC 13346).